The following is a 241-amino-acid chain: Ribonuclease 3 (241 aa).

In terms of domain architecture, RNase III spans 8-137 (LTLLKNRLGI…LLGAVYLDQG (130 aa)). E50 serves as a coordination point for Mg(2+). D54 is a catalytic residue. Residues D123 and E126 each contribute to the Mg(2+) site. E126 is a catalytic residue. The DRBM domain occupies 164–233 (DYKTELQELV…AKKALMKSDL (70 aa)). Residues 214 to 241 (RSKKEAEQQAAKKALMKSDLGSACNHKK) form a disordered region.

The protein belongs to the ribonuclease III family. As to quaternary structure, homodimer. Mg(2+) serves as cofactor.

It localises to the cytoplasm. It carries out the reaction Endonucleolytic cleavage to 5'-phosphomonoester.. Functionally, digests double-stranded RNA. Involved in the processing of primary rRNA transcript to yield the immediate precursors to the large and small rRNAs (23S and 16S). Processes some mRNAs, and tRNAs when they are encoded in the rRNA operon. Processes pre-crRNA and tracrRNA of type II CRISPR loci if present in the organism. This Pelotomaculum thermopropionicum (strain DSM 13744 / JCM 10971 / SI) protein is Ribonuclease 3.